The chain runs to 878 residues: Pyruvate, phosphate dikinase (878 aa).

The N-terminal stretch occupies residues 1–347 (MKKLIYYFGS…LYILQTRTAK (347 aa)). R96 is a binding site for ATP. Residues 348–404 (RTAIAAIKIAVQMVEEKLISKEQALMRIDPESLNQLLHTRIDYSKGLTSIADGLPAS) are linker 1. The segment at 405–502 (PGAATGIIVF…ILKQDDIITI (98 aa)) is central. T457 is modified (phosphothreonine; by PDRP1). The Tele-phosphohistidine intermediate role is filled by H459. The tract at residues 503-537 (DGGTGKVFLGAVPLIQPTFSEESKLILEWADETSK) is linker 2. The interval 538–878 (LKIRTNAETV…AAAQAKIKHG (341 aa)) is C-terminal. 7 residues coordinate substrate: R565, R621, E749, G770, T771, N772, and D773. Mg(2+) is bound at residue E749. D773 is a binding site for Mg(2+). C835 functions as the Proton donor in the catalytic mechanism.

This sequence belongs to the PEP-utilizing enzyme family. As to quaternary structure, homodimer. It depends on Mg(2+) as a cofactor. In terms of processing, phosphorylation of Thr-457 in the dark inactivates the enzyme. Dephosphorylation upon light stimulation reactivates the enzyme.

The catalysed reaction is pyruvate + phosphate + ATP = phosphoenolpyruvate + AMP + diphosphate + H(+). Its activity is regulated as follows. Activated by light-induced dephosphorylation. Inhibited by dark-induced phosphorylation. Both reactions are catalyzed by PDRP1. Its function is as follows. Catalyzes the reversible phosphorylation of pyruvate and phosphate. The polypeptide is Pyruvate, phosphate dikinase (ppdK) (Rickettsia bellii (strain RML369-C)).